The primary structure comprises 452 residues: MKKFTLEEFLDLLKKYNVEEIEGVKIEGDLEIEFEGSSIDLSAIAPLYSMLSEFGNFLYHANMALGYLQRLSAALGIPTPFAAQPQLAPAAPAAPAEVPAVEELKIPAELVRAKFEPYKEEYPGKIEEVVLGATKADGGTREYTVTLGGERSLAFYTFDAPQPHLPAIAIDVFDRRPMLAKAVRMHYEDVLDNPAEWARKCVKKFGADLVTLHLISTDPLLDDTPASEAVKVLEDVLQAVKCPIIVGGSGNKEKDPEVLEKAAEVAEGERIMLASATLDMDWERIANAAKKYGHVVLSWTQMDINNQKTLNRYLLKRVEMPRDSIVMDPTTAALGYGLDYAFTNMERIRISGLKGDTDLNFPISSGTTNAWGAREAWMVDSPIEEDTPWGPRELRGPIWEIITGLTLSLAGVDLFMMMHPVAVAVLKEVFNTLGGKVSGGVADPGEWIFMEV.

The protein belongs to the CdhD family. In terms of assembly, heterodimer of delta and gamma chains. The ACDS complex is made up of alpha, epsilon, beta, gamma and delta chains with a probable stoichiometry of (alpha(2)epsilon(2))(4)-beta(8)-(gamma(1)delta(1))(8).

Its function is as follows. Part of a complex that catalyzes the reversible cleavage of acetyl-CoA, allowing autotrophic growth from CO(2). Probably maintains the overall quaternary structure of the ACDS complex. The chain is Acetyl-CoA decarbonylase/synthase complex subunit delta from Archaeoglobus fulgidus (strain ATCC 49558 / DSM 4304 / JCM 9628 / NBRC 100126 / VC-16).